Here is a 429-residue protein sequence, read N- to C-terminus: Ribosomal RNA small subunit methyltransferase B (429 aa).

S-adenosyl-L-methionine-binding positions include Cys-254–Lys-260, Asp-277, Asp-303, and Asp-322. Cys-375 (nucleophile) is an active-site residue.

This sequence belongs to the class I-like SAM-binding methyltransferase superfamily. RsmB/NOP family.

The protein localises to the cytoplasm. It carries out the reaction cytidine(967) in 16S rRNA + S-adenosyl-L-methionine = 5-methylcytidine(967) in 16S rRNA + S-adenosyl-L-homocysteine + H(+). Specifically methylates the cytosine at position 967 (m5C967) of 16S rRNA. The protein is Ribosomal RNA small subunit methyltransferase B of Photorhabdus laumondii subsp. laumondii (strain DSM 15139 / CIP 105565 / TT01) (Photorhabdus luminescens subsp. laumondii).